A 343-amino-acid chain; its full sequence is UDP-3-O-acylglucosamine N-acyltransferase 2 (343 aa).

His-251 serves as the catalytic Proton acceptor.

It belongs to the transferase hexapeptide repeat family. LpxD subfamily. Homotrimer.

The enzyme catalyses a UDP-3-O-[(3R)-3-hydroxyacyl]-alpha-D-glucosamine + a (3R)-hydroxyacyl-[ACP] = a UDP-2-N,3-O-bis[(3R)-3-hydroxyacyl]-alpha-D-glucosamine + holo-[ACP] + H(+). The protein operates within bacterial outer membrane biogenesis; LPS lipid A biosynthesis. In terms of biological role, catalyzes the N-acylation of UDP-3-O-acylglucosamine using 3-hydroxyacyl-ACP as the acyl donor. Is involved in the biosynthesis of lipid A, a phosphorylated glycolipid that anchors the lipopolysaccharide to the outer membrane of the cell. The protein is UDP-3-O-acylglucosamine N-acyltransferase 2 of Legionella pneumophila (strain Lens).